The primary structure comprises 294 residues: Dolichol-phosphate mannosyltransferase (294 aa).

The disordered stretch occupies residues 1–27; it reads MSIALDMDASAKMRKQPGSSGWSTSST. Topologically, residues 1 to 263 are cytoplasmic; it reads MSIALDMDAS…QQLVELYRFR (263 aa). A compositionally biased stretch (low complexity) spans 17–27; it reads PGSSGWSTSST. GDP-alpha-D-mannose contacts are provided by P35, E39, V70, D72, D123, A124, D125, Q127, R151, K211, R237, and K243. 2 residues coordinate Mg(2+): D125 and Q127. Residues D125 and Q127 each coordinate Mn(2+). Residues 264–284 form a helical membrane-spanning segment; it reads FGTVPIVFVLIVLLVLALYIW. Topologically, residues 285 to 294 are lumenal; sequence SHVLAPMLGA.

Belongs to the glycosyltransferase 2 family. Mg(2+) is required as a cofactor. The cofactor is Mn(2+). It depends on Ca(2+) as a cofactor.

The protein localises to the endoplasmic reticulum membrane. The enzyme catalyses a di-trans,poly-cis-dolichyl phosphate + GDP-alpha-D-mannose = a di-trans,poly-cis-dolichyl beta-D-mannosyl phosphate + GDP. The protein operates within protein modification; protein glycosylation. In terms of biological role, transfers mannose from GDP-mannose to dolichol monophosphate to form dolichol phosphate mannose (Dol-P-Man) which is the mannosyl donor in pathways leading to N-glycosylation, glycosyl phosphatidylinositol membrane anchoring, and O-mannosylation of proteins. In Mycosarcoma maydis (Corn smut fungus), this protein is Dolichol-phosphate mannosyltransferase (DPM1).